Reading from the N-terminus, the 302-residue chain is Probable 2-(5''-triphosphoribosyl)-3'-dephosphocoenzyme-A synthase (302 aa).

It belongs to the CitG/MdcB family.

The enzyme catalyses 3'-dephospho-CoA + ATP = 2'-(5''-triphospho-alpha-D-ribosyl)-3'-dephospho-CoA + adenine. The polypeptide is Probable 2-(5''-triphosphoribosyl)-3'-dephosphocoenzyme-A synthase (Citrobacter koseri (strain ATCC BAA-895 / CDC 4225-83 / SGSC4696)).